The chain runs to 222 residues: Abasic site processing protein YedK (222 aa).

Residue Cys-2 is the Nucleophile of the active site. Cys-2 is subject to Thiazolidine linkage to a ring-opened DNA abasic site. Glu-105 is an active-site residue.

Belongs to the SOS response-associated peptidase family.

Formation and reversal of DNA-protein cross-link depends on DNA context. Catalyzes formation of the thiazolidine linkage in presence of abasic sites in single-stranded DNA. Mediates the reversal of the thiazolidine cross-link in presence of double stranded DNA. In terms of biological role, sensor of abasic sites in single-stranded DNA (ssDNA) required to preserve genome integrity by promoting error-free repair of abasic sites. Recognizes and binds abasic sites in ssDNA at replication forks and chemically modifies the lesion by forming a covalent cross-link with DNA: forms a stable thiazolidine linkage between a ring-opened abasic site and the alpha-amino and sulfhydryl substituents of its N-terminal catalytic cysteine residue. The DNA-protein cross-link is then reversed: able to catalyze the reversal of the thiazolidine cross-link and cycle between a cross-link and a non-cross-linked state depending on DNA context: mediates self-reversal of the thiazolidine cross-link in double stranded DNA. May act as a protease: mediates autocatalytic processing of its N-terminal methionine in order to expose the catalytic cysteine. This Escherichia coli (strain K12) protein is Abasic site processing protein YedK.